A 635-amino-acid polypeptide reads, in one-letter code: Factor of DNA methylation 2 (635 aa).

A coiled-coil region spans residues 289–471 (LDEKKNLHQA…ESMNSVLMTK (183 aa)). Residues 350–365 (ELERQKLDEDKRKSDA) are compositionally biased toward basic and acidic residues. A disordered region spans residues 350 to 376 (ELERQKLDEDKRKSDAMNKSLQLASRE).

Forms a complex with IDN2 and FMD1/INDL1. In terms of tissue distribution, highly expressed in flowers and at lower levels in roots, leaves and stems.

Forms a complex with IDN2 and FDM1/IDNL1 that is required for RNA-directed DNA methylation (RdDM) and that functions at a downstream step of the RdDM pathway. The chain is Factor of DNA methylation 2 from Arabidopsis thaliana (Mouse-ear cress).